Consider the following 428-residue polypeptide: Phosphomethylpyrimidine synthase 1 (428 aa).

Residues Asn-65, Met-94, Tyr-123, His-158, 180 to 182, 221 to 224, and Glu-260 contribute to the substrate site; these read SRG and DGMR. His-264 lines the Zn(2+) pocket. Tyr-287 is a binding site for substrate. His-328 contributes to the Zn(2+) binding site. Residues Cys-405, Cys-408, and Cys-412 each coordinate [4Fe-4S] cluster.

It belongs to the ThiC family. The cofactor is [4Fe-4S] cluster.

The catalysed reaction is 5-amino-1-(5-phospho-beta-D-ribosyl)imidazole + S-adenosyl-L-methionine = 4-amino-2-methyl-5-(phosphooxymethyl)pyrimidine + CO + 5'-deoxyadenosine + formate + L-methionine + 3 H(+). The protein operates within cofactor biosynthesis; thiamine diphosphate biosynthesis. Its function is as follows. Catalyzes the synthesis of the hydroxymethylpyrimidine phosphate (HMP-P) moiety of thiamine from aminoimidazole ribotide (AIR) in a radical S-adenosyl-L-methionine (SAM)-dependent reaction. The protein is Phosphomethylpyrimidine synthase 1 of Methanosarcina mazei (strain ATCC BAA-159 / DSM 3647 / Goe1 / Go1 / JCM 11833 / OCM 88) (Methanosarcina frisia).